Consider the following 92-residue polypeptide: Small ribosomal subunit protein uS19 (92 aa).

Belongs to the universal ribosomal protein uS19 family.

Protein S19 forms a complex with S13 that binds strongly to the 16S ribosomal RNA. In Corynebacterium efficiens (strain DSM 44549 / YS-314 / AJ 12310 / JCM 11189 / NBRC 100395), this protein is Small ribosomal subunit protein uS19.